Consider the following 257-residue polypeptide: Putative carboxymethylenebutenolidase (257 aa).

Catalysis depends on residues C148, D195, and H226.

This sequence belongs to the dienelactone hydrolase family.

The enzyme catalyses 2-(5-oxo-2,5-dihydrofuran-2-ylidene)acetate + H2O = 4-oxohex-2-enedioate + H(+). In Saccharolobus solfataricus (strain ATCC 35092 / DSM 1617 / JCM 11322 / P2) (Sulfolobus solfataricus), this protein is Putative carboxymethylenebutenolidase.